A 362-amino-acid chain; its full sequence is 1-aminocyclopropane-1-carboxylate oxidase homolog 10 (362 aa).

A Fe2OG dioxygenase domain is found at lysine 211–serine 310. Histidine 235, aspartate 237, and histidine 291 together coordinate Fe cation. Arginine 301 contributes to the 2-oxoglutarate binding site.

It belongs to the iron/ascorbate-dependent oxidoreductase family. The cofactor is Fe(2+).

The polypeptide is 1-aminocyclopropane-1-carboxylate oxidase homolog 10 (Arabidopsis thaliana (Mouse-ear cress)).